Here is an 80-residue protein sequence, read N- to C-terminus: Metallothionein-like protein type 2, MT2-22 (80 aa).

Belongs to the metallothionein superfamily. Type 15 family.

In terms of biological role, metallothioneins have a high content of cysteine residues that bind various heavy metals. The protein is Metallothionein-like protein type 2, MT2-22 of Brassica juncea (Indian mustard).